Consider the following 257-residue polypeptide: Imidazole glycerol phosphate synthase subunit HisF (257 aa).

Active-site residues include Asp-11 and Asp-130.

It belongs to the HisA/HisF family. As to quaternary structure, heterodimer of HisH and HisF.

The protein localises to the cytoplasm. The catalysed reaction is 5-[(5-phospho-1-deoxy-D-ribulos-1-ylimino)methylamino]-1-(5-phospho-beta-D-ribosyl)imidazole-4-carboxamide + L-glutamine = D-erythro-1-(imidazol-4-yl)glycerol 3-phosphate + 5-amino-1-(5-phospho-beta-D-ribosyl)imidazole-4-carboxamide + L-glutamate + H(+). It participates in amino-acid biosynthesis; L-histidine biosynthesis; L-histidine from 5-phospho-alpha-D-ribose 1-diphosphate: step 5/9. In terms of biological role, IGPS catalyzes the conversion of PRFAR and glutamine to IGP, AICAR and glutamate. The HisF subunit catalyzes the cyclization activity that produces IGP and AICAR from PRFAR using the ammonia provided by the HisH subunit. The polypeptide is Imidazole glycerol phosphate synthase subunit HisF (Prochlorococcus marinus (strain SARG / CCMP1375 / SS120)).